The chain runs to 141 residues: Anthrone oxygenase ptaC (141 aa).

The signal sequence occupies residues 1-19; it reads MMGLPLMAVPMLLDTGADP. 2 consecutive transmembrane segments (helical) span residues 33–53 and 64–84; these read GVRT…WTII and ILAV…YVLA.

It belongs to the anthrone oxygenase family.

It is found in the membrane. The protein operates within secondary metabolite biosynthesis. Anthrone oxygenase; part of the gene cluster that mediates the biosynthesis of pestheic acid, a diphenyl ether which is a biosynthetic precursor of the unique chloropupukeananes. The biosynthesis initiates from condensation of acetate and malonate units catalyzed by the non-reducing PKS ptaA. As the ptaA protein is TE/CLC domain-deficient, hydrolysis and Claisen cyclization of the polyketide could be catalyzed by ptaB containing a beta-lactamase domain. The ptaB protein might hydrolyze the thioester bond between the ACP of ptaA and the intermediate to release atrochrysone carboxylic acid, which is spontaneously dehydrated to form endocrocin anthrone. Endocrocin anthrone is then converted to endocrocin, catalyzed by the anthrone oxygenase ptaC. Spontaneous decarboxylation of endocrocin occurs to generate emodin. An O-methyltransferase (ptaH or ptaI) could methylate emodin to form physcion. PtaJ could then catalyze the oxidative cleavage of physcion, and rotation of the intermediate could then afford desmethylisosulochrin. PtaF, a putative NADH-dependent oxidoreductase, might also participate in the oxidative cleavage step. Desmethylisosulochrin is then transformed by another O-methyltransferase (ptaH or ptaI) to form isosulochrin. Chlorination of isosulochrin by ptaM in the cyclohexadienone B ring then produces chloroisosulochrin. PtaE is responsible for the oxidative coupling reactions of both benzophenones isosulochrin and chloroisosulochrin to RES-1214-1 and pestheic acid respectively, regardless of chlorination. This Pestalotiopsis fici (strain W106-1 / CGMCC3.15140) protein is Anthrone oxygenase ptaC.